A 91-amino-acid chain; its full sequence is Probable Fe(2+)-trafficking protein (91 aa).

This sequence belongs to the Fe(2+)-trafficking protein family.

Functionally, could be a mediator in iron transactions between iron acquisition and iron-requiring processes, such as synthesis and/or repair of Fe-S clusters in biosynthetic enzymes. The polypeptide is Probable Fe(2+)-trafficking protein (Histophilus somni (strain 129Pt) (Haemophilus somnus)).